Consider the following 422-residue polypeptide: Probable FBD-associated F-box protein At1g32375 (422 aa).

The F-box domain occupies M1–I53. The region spanning C342–S392 is the FBD domain.

In Arabidopsis thaliana (Mouse-ear cress), this protein is Probable FBD-associated F-box protein At1g32375.